A 126-amino-acid chain; its full sequence is Glycine cleavage system H protein (126 aa).

In terms of domain architecture, Lipoyl-binding spans 23 to 104 (TLTVGITDHA…PYESWLFKIK (82 aa)). Lys64 bears the N6-lipoyllysine mark.

The protein belongs to the GcvH family. As to quaternary structure, the glycine cleavage system is composed of four proteins: P, T, L and H. The cofactor is (R)-lipoate.

Its function is as follows. The glycine cleavage system catalyzes the degradation of glycine. The H protein shuttles the methylamine group of glycine from the P protein to the T protein. This chain is Glycine cleavage system H protein, found in Paraburkholderia xenovorans (strain LB400).